The chain runs to 126 residues: UPF0102 protein Cphamn1_0017 (126 aa).

Belongs to the UPF0102 family.

This chain is UPF0102 protein Cphamn1_0017, found in Chlorobium phaeobacteroides (strain BS1).